A 486-amino-acid polypeptide reads, in one-letter code: NADH-quinone oxidoreductase subunit N (486 aa).

14 helical membrane-spanning segments follow: residues 8-28, 36-56, 74-94, 104-124, 125-145, 160-180, 204-224, 239-259, 270-290, 298-318, 329-349, 374-394, 407-427, and 459-479; these read LIAL…ILSI, FIAF…YFLI, ILYI…AYPW, EFYL…ISNH, MASL…LIAY, LVLS…IYAI, VLFG…MVPF, VLSF…LYFF, IFLI…LMAI, FFGY…LVSK, GIFL…INLF, ASIV…LGFF, HLWT…YGYL, and ILIF…NPLI.

It belongs to the complex I subunit 2 family. As to quaternary structure, NDH-1 is composed of 13 different subunits. Subunits NuoA, H, J, K, L, M, N constitute the membrane sector of the complex.

The protein localises to the cell membrane. The catalysed reaction is a quinone + NADH + 5 H(+)(in) = a quinol + NAD(+) + 4 H(+)(out). In terms of biological role, NDH-1 shuttles electrons from NADH, via FMN and iron-sulfur (Fe-S) centers, to quinones in the respiratory chain. The immediate electron acceptor for the enzyme in this species is believed to be ubiquinone. Couples the redox reaction to proton translocation (for every two electrons transferred, four hydrogen ions are translocated across the cytoplasmic membrane), and thus conserves the redox energy in a proton gradient. In Buchnera aphidicola subsp. Schizaphis graminum (strain Sg), this protein is NADH-quinone oxidoreductase subunit N.